The following is a 421-amino-acid chain: Proton/sodium-glutamate symport protein (421 aa).

The Cytoplasmic segment spans residues 1-3 (MRK). A helical transmembrane segment spans residues 4-24 (IGLAWQIFIGLILGIIVGAIF). Residues 25-43 (YGNPKVAAYLQPIGDIFLR) lie on the Extracellular side of the membrane. A helical membrane pass occupies residues 44–64 (LIKMIVIPIVISSLVVGVASV). The Cytoplasmic portion of the chain corresponds to 65-77 (GDLKKLGKLGGKT). The chain crosses the membrane as a helical span at residues 78–98 (IIYFEIITTIAIVVGLLAANI). The Extracellular segment spans residues 99–148 (FQPGAGVNMKSLEKTDIQSYVDTTNEVQHHSMVETFVNIVPKNIFESLST). A helical transmembrane segment spans residues 149 to 169 (GDMLPIIFFSVMFGLGVAAIG). Over 170 to 198 (EKGKPVLQFFQGTAEAMFYVTNQIMKFAP) the chain is Cytoplasmic. Residues 199-219 (FGVFALIGVTVSKFGVESLIP) form a helical membrane-spanning segment. Over 220–222 (LSK) the chain is Extracellular. A helical transmembrane segment spans residues 223 to 243 (LVIVVYATMLFFIFAVLGGVA). Lys244 is a topological domain (cytoplasmic). Residues 245–265 (LFGINIFHIIKILKDELILAY) traverse the membrane as a helical segment. Residues 266–306 (STASSETVLPRIMDKMEKFGCPKAITSFVIPTGYSFNLDGS) are Extracellular-facing. A helical membrane pass occupies residues 307–327 (TLYQALAAIFIAQLYGIDMSV). Over 328-330 (SQQ) the chain is Cytoplasmic. Helical transmembrane passes span 331 to 351 (ISLLLVLMVTSKGIAGVPGVS) and 352 to 372 (FVVLLATLGTVGIPVEGLAFI). Residues 373-421 (AGIDRILDMARTAVNVIGNSLAAIIMSKWEGQYNEEKGKQYLAELQQSA) lie on the Cytoplasmic side of the membrane.

Belongs to the dicarboxylate/amino acid:cation symporter (DAACS) (TC 2.A.23) family. Homotrimer.

Its subcellular location is the cell membrane. This carrier protein is part of the Na(+)-dependent, binding-protein-independent glutamate-aspartate transport system. This is Proton/sodium-glutamate symport protein (gltT) from Bacillus caldotenax.